Reading from the N-terminus, the 763-residue chain is Ethylene receptor 2 (763 aa).

Helical transmembrane passes span 58-78, 86-106, and 115-135; these read FLIAMAYFSIPLELLYFATCS, IVLQFGAFIVLCGLTHLITMF, and VVLALTVAKFLTALVSFATAI. Residues cysteine 97 and histidine 101 each coordinate Cu cation. The GAF domain maps to 190-339; it reads DRHTILYTTM…VVADQVAVAL (150 aa). The Histidine kinase domain maps to 382 to 615; the sequence is AMYDGMRRPM…TIMLALQFQL (234 aa). The 120-residue stretch at 641-760 folds into the Response regulatory domain; the sequence is QVILVDSDDT…ALGDELYRVL (120 aa). Position 692 is a 4-aspartylphosphate (aspartate 692).

This sequence belongs to the ethylene receptor family. Requires Cu cation as cofactor. As to expression, expressed in anthers and hulls.

The protein resides in the endoplasmic reticulum membrane. The enzyme catalyses ATP + protein L-histidine = ADP + protein N-phospho-L-histidine.. Functionally, ethylene receptor related to bacterial two-component regulators. Acts as a negative regulator of ethylene signaling. May delay the transition from the vegetative stage to the floral stage by up-regulating GI (GIGANTEA) and RCN1 and cause starch accumulation in stems by down-regulating the alpha-amylase AMY3D. This is Ethylene receptor 2 from Oryza sativa subsp. indica (Rice).